A 248-amino-acid polypeptide reads, in one-letter code: uncharacterized protein (248 aa).

Substrate is bound at residue Ser-141. Tyr-154 (proton acceptor) is an active-site residue.

Belongs to the short-chain dehydrogenases/reductases (SDR) family.

This is an uncharacterized protein from Methylorubrum extorquens (strain ATCC 14718 / DSM 1338 / JCM 2805 / NCIMB 9133 / AM1) (Methylobacterium extorquens).